Here is a 430-residue protein sequence, read N- to C-terminus: Palmitoyltransferase ZDHHC11 (430 aa).

The Cytoplasmic segment spans residues 1-46; the sequence is MTNLNCFGRHRRRTAPHNATGSRSELVAPPIHSRINGWSSPLHSFQ. Residues 47-67 traverse the membrane as a helical segment; sequence FIALLIFSFMAIVAFGIYVPL. The Lumenal segment spans residues 68-76; the sequence is LPAPWSYAA. A helical membrane pass occupies residues 77-97; the sequence is YALIGSAFVLHLFSHVTAVTI. Residues 98–176 are Cytoplasmic-facing; it reads DPADVNVRRR…GGRNYWFFFT (79 aa). The DHHC domain occupies 129–179; it reads LHCTLCEVDVSPKAKHCSTCNKCIADFDHHCKWLNNCVGGRNYWFFFTAVS. The S-palmitoyl cysteine intermediate role is filled by Cys-159. A helical transmembrane segment spans residues 177–197; it reads AVSSAVIGVILLIPLVLFVFI. Over 198–234 the chain is Lumenal; it reads EHYVNPAVLRTAPQFQTVKGNGTWLVFLPVAPVETSS. Residues 235–255 form a helical membrane-spanning segment; sequence ISLLVVSFITALLSLAALLLL. The Cytoplasmic portion of the chain corresponds to 256–430; that stretch reads CHLLCFHIYL…QYLHFKQKMP (175 aa).

The protein belongs to the DHHC palmitoyltransferase family.

Its subcellular location is the endoplasmic reticulum membrane. The catalysed reaction is L-cysteinyl-[protein] + hexadecanoyl-CoA = S-hexadecanoyl-L-cysteinyl-[protein] + CoA. Its function is as follows. Endoplasmic reticulum-localized palmitoyltransferase that could catalyze the addition of palmitate onto protein substrates. The protein is Palmitoyltransferase ZDHHC11 of Danio rerio (Zebrafish).